The primary structure comprises 724 residues: Probable serine/threonine-protein kinase KKQ8 (724 aa).

Disordered regions lie at residues 1–81 (MVMQ…RQRS) and 93–188 (HPFR…KDIL). The residue at position 19 (serine 19) is a Phosphoserine. The span at 45-54 (PYRSSSTSPK) shows a compositional bias: low complexity. The segment covering 95-106 (FRQTGSGASNSP) has biased composition (polar residues). A compositionally biased stretch (low complexity) spans 143–162 (RSSSVSSCDSSNGTTSSSDS). Serine 232, serine 238, and serine 241 each carry phosphoserine. 2 stretches are compositionally biased toward polar residues: residues 318 to 329 (NASSLLPNVEKS) and 338 to 351 (GQSP…SPTQ). The disordered stretch occupies residues 318–355 (NASSLLPNVEKSQTNHEKRTGQSPNDSNRSSPTQGRED). The 301-residue stretch at 412 to 712 (GHPVGLVGAG…VGKLLDMQWM (301 aa)) folds into the Protein kinase domain. Residues 418–426 (VGAGAYGEV) and lysine 455 contribute to the ATP site. Aspartate 563 functions as the Proton acceptor in the catalytic mechanism.

The protein belongs to the protein kinase superfamily. CAMK Ser/Thr protein kinase family. NPR/HAL subfamily. HAL5 sub-subfamily.

The protein resides in the cytoplasm. It catalyses the reaction L-seryl-[protein] + ATP = O-phospho-L-seryl-[protein] + ADP + H(+). It carries out the reaction L-threonyl-[protein] + ATP = O-phospho-L-threonyl-[protein] + ADP + H(+). In Saccharomyces cerevisiae (strain YJM789) (Baker's yeast), this protein is Probable serine/threonine-protein kinase KKQ8 (KKQ8).